Reading from the N-terminus, the 238-residue chain is Small ribosomal subunit protein uS2 (238 aa).

Belongs to the universal ribosomal protein uS2 family.

In Chloroflexus aurantiacus (strain ATCC 29366 / DSM 635 / J-10-fl), this protein is Small ribosomal subunit protein uS2.